Here is a 321-residue protein sequence, read N- to C-terminus: Lipoyl synthase (321 aa).

Cys68, Cys73, Cys79, Cys94, Cys98, Cys101, and Ser308 together coordinate [4Fe-4S] cluster. The region spanning 80–297 is the Radical SAM core domain; that stretch reads FNHGTATFMI…KEVALELGFT (218 aa).

It belongs to the radical SAM superfamily. Lipoyl synthase family. It depends on [4Fe-4S] cluster as a cofactor.

Its subcellular location is the cytoplasm. It catalyses the reaction [[Fe-S] cluster scaffold protein carrying a second [4Fe-4S](2+) cluster] + N(6)-octanoyl-L-lysyl-[protein] + 2 oxidized [2Fe-2S]-[ferredoxin] + 2 S-adenosyl-L-methionine + 4 H(+) = [[Fe-S] cluster scaffold protein] + N(6)-[(R)-dihydrolipoyl]-L-lysyl-[protein] + 4 Fe(3+) + 2 hydrogen sulfide + 2 5'-deoxyadenosine + 2 L-methionine + 2 reduced [2Fe-2S]-[ferredoxin]. Its pathway is protein modification; protein lipoylation via endogenous pathway; protein N(6)-(lipoyl)lysine from octanoyl-[acyl-carrier-protein]: step 2/2. In terms of biological role, catalyzes the radical-mediated insertion of two sulfur atoms into the C-6 and C-8 positions of the octanoyl moiety bound to the lipoyl domains of lipoate-dependent enzymes, thereby converting the octanoylated domains into lipoylated derivatives. The sequence is that of Lipoyl synthase from Vibrio parahaemolyticus serotype O3:K6 (strain RIMD 2210633).